The chain runs to 510 residues: NAD(P)H-quinone oxidoreductase subunit 2 A, chloroplastic (510 aa).

The next 13 helical transmembrane spans lie at 24–44, 57–77, 99–119, 124–144, 149–169, 183–203, 227–247, 295–315, 323–343, 354–374, 395–415, 418–438, and 482–502; these read LLLF…GLIL, MPWL…ALLF, IFQF…VEYI, MAIT…MFLC, LITI…LSGY, YLLM…WLYG, PGIS…LSPA, WHLL…LIAI, MLAY…IVGD, YMLF…LFGL, ALSL…AGFF, LHLF…IGLL, and LSMI…SPII.

It belongs to the complex I subunit 2 family. In terms of assembly, NDH is composed of at least 16 different subunits, 5 of which are encoded in the nucleus.

Its subcellular location is the plastid. It is found in the chloroplast thylakoid membrane. The enzyme catalyses a plastoquinone + NADH + (n+1) H(+)(in) = a plastoquinol + NAD(+) + n H(+)(out). The catalysed reaction is a plastoquinone + NADPH + (n+1) H(+)(in) = a plastoquinol + NADP(+) + n H(+)(out). Its function is as follows. NDH shuttles electrons from NAD(P)H:plastoquinone, via FMN and iron-sulfur (Fe-S) centers, to quinones in the photosynthetic chain and possibly in a chloroplast respiratory chain. The immediate electron acceptor for the enzyme in this species is believed to be plastoquinone. Couples the redox reaction to proton translocation, and thus conserves the redox energy in a proton gradient. This is NAD(P)H-quinone oxidoreductase subunit 2 A, chloroplastic from Populus trichocarpa (Western balsam poplar).